Reading from the N-terminus, the 475-residue chain is Gamma-aminobutyric acid receptor subunit gamma-2 (475 aa).

The N-terminal stretch at 1 to 39 is a signal peptide; the sequence is MSSPNIWSTGSSVYSTPVFSQKMTLWILLLLSLYPGLTR. Residues 41–275 lie on the Extracellular side of the membrane; the sequence is KSDDDYEDYA…FDLSRRMGYF (235 aa). 2 N-linked (GlcNAc...) asparagine glycosylation sites follow: Asn-52 and Asn-129. Cys-190 and Cys-204 are disulfide-bonded. N-linked (GlcNAc...) asparagine glycosylation is present at Asn-247. A helical membrane pass occupies residues 276-296; that stretch reads TIQTYIPCTLIVVLSWVSFWI. Residues 297–302 are Cytoplasmic-facing; the sequence is NKDAVP. The chain crosses the membrane as a helical span at residues 303–322; sequence ARTSLGITTVLTMTTLSTIA. Over 323 to 334 the chain is Extracellular; that stretch reads RKSLPKVSYVTA. A helical transmembrane segment spans residues 335-359; it reads MDLFVSVCFIFVFSALVEYGTLHYF. Topologically, residues 360–451 are cytoplasmic; the sequence is VSNRKPSKDK…IHIRIAKMDS (92 aa). The residue at position 382 (Ser-382) is a Phosphoserine; by PKC. The helical transmembrane segment at 452–472 threads the bilayer; that stretch reads YARIFFPTAFCLFNLVYWVSY. At 473–475 the chain is on the extracellular side; sequence LYL.

The protein belongs to the ligand-gated ion channel (TC 1.A.9) family. Gamma-aminobutyric acid receptor (TC 1.A.9.5) subfamily. GABRG2 sub-subfamily. As to quaternary structure, heteropentamer, formed by a combination of alpha (GABRA1-6), beta (GABRB1-3), gamma (GABRG1-3), delta (GABRD), epsilon (GABRE), rho (GABRR1-3), pi (GABRP) and theta (GABRQ) chains, each subunit exhibiting distinct physiological and pharmacological properties. Interacts with GABARAP. Interacts with KIF21B. Identified in a complex of 720 kDa composed of LHFPL4, NLGN2, GABRA1, GABRB2, GABRG2 and GABRB3. Interacts with LHFPL4. Interacts with SHISA7; interaction leads to the regulation of GABA(A) receptor trafficking, channel deactivation kinetics and pharmacology. Post-translationally, palmitoylated by ZDHHC3/GODZ; required for the accumulation of GABA(A) receptors at the postsynaptic membrane of inhibitory GABAergic synapses. Glycosylated.

The protein localises to the postsynaptic cell membrane. It is found in the cell membrane. The protein resides in the cell projection. It localises to the dendrite. Its subcellular location is the cytoplasmic vesicle membrane. The enzyme catalyses chloride(in) = chloride(out). Allosterically activated by benzodiazepines. Activated by pentobarbital. Inhibited by the antagonist bicuculline. Inhibited by zinc ions. Potentiated by histamine. Functionally, gamma subunit of the heteropentameric ligand-gated chloride channel gated by gamma-aminobutyric acid (GABA), a major inhibitory neurotransmitter in the brain. GABA-gated chloride channels, also named GABA(A) receptors (GABAAR), consist of five subunits arranged around a central pore and contain GABA active binding site(s) located at the alpha and beta subunit interface(s). When activated by GABA, GABAARs selectively allow the flow of chloride anions across the cell membrane down their electrochemical gradient. Gamma-2/GABRG2-containing GABAARs are found at both synaptic and extrasynaptic sites. Chloride influx into the postsynaptic neuron following GABAAR opening decreases the neuron ability to generate a new action potential, thereby reducing nerve transmission. GABAARs containing alpha-1 and beta-2 or -3 subunits exhibit synaptogenic activity; the gamma-2 subunit being necessary but not sufficient to induce rapid synaptic contacts formation. Extrasynaptic gamma-2-containing receptors contribute to the tonic GABAergic inhibition. GABAARs function also as histamine receptor where histamine binds at the interface of two neighboring beta subunits and potentiates GABA response in a gamma-2 subunit-controlled manner. This is Gamma-aminobutyric acid receptor subunit gamma-2 (GABRG2) from Bos taurus (Bovine).